An 80-amino-acid chain; its full sequence is Sulfur carrier protein TusA (80 aa).

Residue Cys-17 is the Cysteine persulfide intermediate of the active site.

The protein belongs to the sulfur carrier protein TusA family.

The protein resides in the cytoplasm. In terms of biological role, sulfur carrier protein which probably makes part of a sulfur-relay system. The chain is Sulfur carrier protein TusA from Pseudomonas entomophila (strain L48).